The primary structure comprises 473 residues: ATP synthase subunit beta (473 aa).

158-165 contributes to the ATP binding site; that stretch reads GGAGVGKT.

The protein belongs to the ATPase alpha/beta chains family. F-type ATPases have 2 components, CF(1) - the catalytic core - and CF(0) - the membrane proton channel. CF(1) has five subunits: alpha(3), beta(3), gamma(1), delta(1), epsilon(1). CF(0) has three main subunits: a(1), b(2) and c(9-12). The alpha and beta chains form an alternating ring which encloses part of the gamma chain. CF(1) is attached to CF(0) by a central stalk formed by the gamma and epsilon chains, while a peripheral stalk is formed by the delta and b chains.

The protein resides in the cell membrane. The enzyme catalyses ATP + H2O + 4 H(+)(in) = ADP + phosphate + 5 H(+)(out). Its function is as follows. Produces ATP from ADP in the presence of a proton gradient across the membrane. The catalytic sites are hosted primarily by the beta subunits. This chain is ATP synthase subunit beta, found in Geobacillus stearothermophilus (Bacillus stearothermophilus).